The following is a 359-amino-acid chain: Gene 58 protein (359 aa).

11 consecutive transmembrane segments (helical) span residues 12-32, 45-65, 75-95, 103-123, 132-152, 154-174, 220-240, 246-266, 271-289, 296-318, and 330-350; these read TMAA…CFLF, VDEL…FFCF, YLDL…ICLQ, YLPI…PVTF, YANA…YLLL, FGSV…IAGL, LCVV…AGVY, VLKT…GMGY, ATFV…VFVL, SVLF…TIML, and IVLS…NVLY.

This sequence belongs to the herpesviridae BMRF2 family.

Its subcellular location is the host membrane. This is Gene 58 protein (58) from Equine herpesvirus 2 (strain 86/87) (EHV-2).